The chain runs to 107 residues: MIIVTSNDIPGYKIAAVFGEVFGLTVRSRHIGSNLAASFKSIAGGELKGITQLLHESRREALARLAAEAEARGANAVVAFRFETTEYANTGVEVCAYGTAVGIQPIQ.

Belongs to the UPF0145 family.

The polypeptide is UPF0145 protein MAB_3451c (Mycobacteroides abscessus (strain ATCC 19977 / DSM 44196 / CCUG 20993 / CIP 104536 / JCM 13569 / NCTC 13031 / TMC 1543 / L948) (Mycobacterium abscessus)).